A 178-amino-acid chain; its full sequence is Interleukin-10 (178 aa).

Positions 1–18 (MHSSALLCCLVLLTGVRA) are cleaved as a signal peptide. Disulfide bonds link cysteine 30–cysteine 126 and cysteine 80–cysteine 132. Residue asparagine 134 is glycosylated (N-linked (GlcNAc...) asparagine).

It belongs to the IL-10 family. In terms of assembly, homodimer. Interacts with IL10RA and IL10RB.

The protein localises to the secreted. In terms of biological role, major immune regulatory cytokine that acts on many cells of the immune system where it has profound anti-inflammatory functions, limiting excessive tissue disruption caused by inflammation. Mechanistically, IL10 binds to its heterotetrameric receptor comprising IL10RA and IL10RB leading to JAK1 and STAT2-mediated phosphorylation of STAT3. In turn, STAT3 translocates to the nucleus where it drives expression of anti-inflammatory mediators. Targets antigen-presenting cells (APCs) such as macrophages and monocytes and inhibits their release of pro-inflammatory cytokines including granulocyte-macrophage colony-stimulating factor /GM-CSF, granulocyte colony-stimulating factor/G-CSF, IL-1 alpha, IL-1 beta, IL-6, IL-8 and TNF-alpha. Also interferes with antigen presentation by reducing the expression of MHC-class II and co-stimulatory molecules, thereby inhibiting their ability to induce T cell activation. In addition, controls the inflammatory response of macrophages by reprogramming essential metabolic pathways including mTOR signaling. This Pan troglodytes (Chimpanzee) protein is Interleukin-10 (IL10).